The sequence spans 462 residues: MSKMWSGRFNANASTLLDQFNASLPFDKELYLQDIQGSIAHATMLAKQGILSQEEAESIIHGLKTVKEKIENGQFEWNIEDEDIHMAIEKALTNLIGDAGKKLHTARSRNDQVALDFRLYVQQSNKDLIRLLANLMQTLINIAKNHTQTLIPGMTHLQHAQPISFAYHLLAYASMFKRDIERFQSSFERNNYSPIGCAALAGTPHPIDREMTAQELGFDAPTINCLDTVSDRDFALEILFNIATMFMHISRLSEELILWSSYEFGFVTLSDEYSTGSSIMPQKKNPDVPELLRGKTGRAYGNLMALLTVMKGLPLAYNKDMQEDKEGVFDSVKNAKISLEILNETLKTMNINKEKMEAATKIGHLTATDLADYLVEKIGIPFREAHFITGKAVALAEQKQKDLSELSLAELQSIDPRIQNDVLQYLDLQHSMNARNSYGGTAKEQVEKQIEYFERFLEELEG.

It belongs to the lyase 1 family. Argininosuccinate lyase subfamily.

The protein resides in the cytoplasm. The catalysed reaction is 2-(N(omega)-L-arginino)succinate = fumarate + L-arginine. Its pathway is amino-acid biosynthesis; L-arginine biosynthesis; L-arginine from L-ornithine and carbamoyl phosphate: step 3/3. This chain is Argininosuccinate lyase, found in Nitratiruptor sp. (strain SB155-2).